The following is a 125-amino-acid chain: Large ribosomal subunit protein bL12 (125 aa).

This sequence belongs to the bacterial ribosomal protein bL12 family. As to quaternary structure, homodimer. Part of the ribosomal stalk of the 50S ribosomal subunit. Forms a multimeric L10(L12)X complex, where L10 forms an elongated spine to which 2 to 4 L12 dimers bind in a sequential fashion. Binds GTP-bound translation factors.

Its function is as follows. Forms part of the ribosomal stalk which helps the ribosome interact with GTP-bound translation factors. Is thus essential for accurate translation. This Cereibacter sphaeroides (Rhodobacter sphaeroides) protein is Large ribosomal subunit protein bL12.